The primary structure comprises 293 residues: Protein transport protein yif1 (293 aa).

Residues 1–139 (MPPKLYHPQP…PPAEDLNSPD (139 aa)) lie on the Cytoplasmic side of the membrane. Residues 140–160 (MYIPLMAFTTHILLLCALAGL) traverse the membrane as a helical segment. Residues 161 to 175 (QDDFQPELFGLRASK) are Lumenal-facing. Residues 176 to 196 (ACAVVLVEFLATRLGCYLLNI) form a helical membrane-spanning segment. The Cytoplasmic segment spans residues 197-201 (SSQSQ). A helical membrane pass occupies residues 202 to 222 (VLDLLAFSGYKFVGLILTSLS). Over 223-226 (KLFE) the chain is Lumenal. Residues 227 to 247 (MPWVTRFVFLYMYLATAFFLL) traverse the membrane as a helical segment. Over 248–271 (RSLKYAVLPESTMAINATITSHQR) the chain is Cytoplasmic. Residues 272 to 292 (SRRIYFLFFIAASQILFMYVL) form a helical membrane-spanning segment. Residue Ser-293 is a topological domain, lumenal.

The protein belongs to the YIF1 family. Component of the yip1-yif1 complex, composed of at least yif1, yip1 and yos1. The complex interacts with the ER to Golgi SNAREs bos1 and sec22.

The protein resides in the endoplasmic reticulum membrane. The protein localises to the golgi apparatus membrane. Its subcellular location is the cytoplasmic vesicle. It is found in the COPII-coated vesicle. In terms of biological role, required for fusion of ER-derived vesicles with the Golgi during ER-to-Golgi protein transport. May be involved in proper membrane localization of Rab GTPases. This is Protein transport protein yif1 from Schizosaccharomyces pombe (strain 972 / ATCC 24843) (Fission yeast).